A 479-amino-acid polypeptide reads, in one-letter code: Transmembrane protein 161A (479 aa).

The signal sequence occupies residues 1 to 28; the sequence is MAVLGVQLVVTLLTATLMHRLAPHCSFA. Topologically, residues 29–98 are extracellular; it reads RWLLCNGSLF…LTTVDALVLR (70 aa). The N-linked (GlcNAc...) asparagine glycan is linked to Asn-34. Ser-69 carries the post-translational modification Phosphoserine. The chain crosses the membrane as a helical span at residues 99 to 119; sequence FFLEYQWFVDFAVYSGGVYLF. The Cytoplasmic portion of the chain corresponds to 120-134; the sequence is TEAYYYMLGPAKETN. A helical membrane pass occupies residues 135 to 155; the sequence is IAVFWCLLTVTFSIKMFLTVT. Over 156 to 166 the chain is Extracellular; that stretch reads RLYFSAEEGGE. Residues 167 to 187 traverse the membrane as a helical segment; that stretch reads RSVCLTFAFLFLLLAMLVQVV. At 188 to 224 the chain is on the cytoplasmic side; it reads REETLELGLEPGLASMTQNLEPLLKKQGWDWALPVAK. Residues 225–245 traverse the membrane as a helical segment; it reads LAIRVGLAVVGSVLGAFLTFP. Over 246–263 the chain is Extracellular; the sequence is GLRLAQTHRDALTMSEDR. A helical membrane pass occupies residues 264 to 284; it reads PMLQFLLHTSFLSPLFILWLW. At 285–304 the chain is on the cytoplasmic side; that stretch reads TKPIARDFLHQPPFGETRFS. A helical membrane pass occupies residues 305 to 325; that stretch reads LLSDSAFDSGRLWLLVVLCLL. Residues 326–370 lie on the Extracellular side of the membrane; that stretch reads RLAVTRPHLQAYLCLAKARVEQLRREAGRIEAREIQQRVVRVYCY. A helical membrane pass occupies residues 371–391; that stretch reads VTVVSLQYLTPLILTLNCTLL. Over 392–449 the chain is Cytoplasmic; sequence LKTLGGYSWGLGPAPLLSPDPSSASAAPIGSGEDEVQQTAARIAGALGGLLTPLFLRG. The chain crosses the membrane as a helical span at residues 450–470; the sequence is VLAYLIWWTAACQLLASLFGL. Topologically, residues 471–479 are extracellular; sequence YFHQHLAGS.

The protein belongs to the TMEM161 family.

Its subcellular location is the membrane. Its function is as follows. May play a role in protection against oxidative stress. Overexpression leads to reduced levels of oxidant-induced DNA damage and apoptosis. The protein is Transmembrane protein 161A (TMEM161A) of Homo sapiens (Human).